The chain runs to 355 residues: Histidinol-phosphate aminotransferase (355 aa).

Position 222 is an N6-(pyridoxal phosphate)lysine (K222).

The protein belongs to the class-II pyridoxal-phosphate-dependent aminotransferase family. Histidinol-phosphate aminotransferase subfamily. Pyridoxal 5'-phosphate is required as a cofactor.

It catalyses the reaction L-histidinol phosphate + 2-oxoglutarate = 3-(imidazol-4-yl)-2-oxopropyl phosphate + L-glutamate. Its pathway is amino-acid biosynthesis; L-histidine biosynthesis; L-histidine from 5-phospho-alpha-D-ribose 1-diphosphate: step 7/9. The sequence is that of Histidinol-phosphate aminotransferase from Natronomonas pharaonis (strain ATCC 35678 / DSM 2160 / CIP 103997 / JCM 8858 / NBRC 14720 / NCIMB 2260 / Gabara) (Halobacterium pharaonis).